We begin with the raw amino-acid sequence, 334 residues long: MEQNSRALIDGFNRKIDYLRMSVTDRCDFRCVYCMAEDMQFLPRQQILSLEELFQVAERFVALGTRKIRLTGGEPLVRQGIVELCGRIAALPGLRELCMTSNGSQLGRLAQPLFDAGVTRLNISLDSLDTDRFKQLTRTGDLAQVVAGIDAARQAGFKRTKLNCVVLKGRNDHELVDLVRFAIDRELDITFIEEMPLGTISEHERGESFCSSDEVRERLAGQFTLIESTESSQGPARYWRLAEAANTRVGFISPHSHNFCATCNRVRLTVEGRLLLCLGNEHSVDLKHVLRAHPGNPERLEKAIRDSLHLKPYRHHFEVGGEVQILRFMNMTGG.

The 226-residue stretch at Gly11–Ala236 folds into the Radical SAM core domain. Position 20 (Arg20) interacts with GTP. Residues Cys27 and Cys31 each coordinate [4Fe-4S] cluster. Tyr33 serves as a coordination point for S-adenosyl-L-methionine. Residue Cys34 coordinates [4Fe-4S] cluster. Arg69 contacts GTP. Gly73 is a binding site for S-adenosyl-L-methionine. Thr100 lines the GTP pocket. Position 124 (Ser124) interacts with S-adenosyl-L-methionine. Lys161 contributes to the GTP binding site. Position 195 (Met195) interacts with S-adenosyl-L-methionine. Cys260 and Cys263 together coordinate [4Fe-4S] cluster. Arg265–Arg267 contributes to the GTP binding site. Cys277 is a binding site for [4Fe-4S] cluster.

Belongs to the radical SAM superfamily. MoaA family. As to quaternary structure, monomer and homodimer. Requires [4Fe-4S] cluster as cofactor.

It catalyses the reaction GTP + AH2 + S-adenosyl-L-methionine = (8S)-3',8-cyclo-7,8-dihydroguanosine 5'-triphosphate + 5'-deoxyadenosine + L-methionine + A + H(+). Its pathway is cofactor biosynthesis; molybdopterin biosynthesis. Catalyzes the cyclization of GTP to (8S)-3',8-cyclo-7,8-dihydroguanosine 5'-triphosphate. The chain is GTP 3',8-cyclase from Pseudomonas putida (strain GB-1).